A 526-amino-acid chain; its full sequence is Na(+)/H(+) antiporter NhaB (526 aa).

11 helical membrane-spanning segments follow: residues 25 to 45 (IIAF…IAGW), 52 to 72 (IFTL…LLLI), 89 to 109 (IVVN…IYFM), 139 to 159 (AFLS…AVGM), 204 to 224 (LMMH…VGEP), 240 to 260 (FFVR…ATTF), 305 to 325 (GFIG…VGLI), 355 to 375 (FTAL…QGLF), 391 to 411 (LVMF…VFVG), 448 to 468 (VATP…IAPL), and 479 to 499 (MALP…YFGL).

The protein belongs to the NhaB Na(+)/H(+) (TC 2.A.34) antiporter family.

It localises to the cell inner membrane. It carries out the reaction 2 Na(+)(in) + 3 H(+)(out) = 2 Na(+)(out) + 3 H(+)(in). In terms of biological role, na(+)/H(+) antiporter that extrudes sodium in exchange for external protons. The polypeptide is Na(+)/H(+) antiporter NhaB (Pseudoalteromonas atlantica (strain T6c / ATCC BAA-1087)).